The chain runs to 398 residues: 8-amino-7-oxononanoate synthase (398 aa).

Arg23 contacts substrate. 110 to 111 (GY) provides a ligand contact to pyridoxal 5'-phosphate. Position 135 (His135) interacts with substrate. 3 residues coordinate pyridoxal 5'-phosphate: Ser181, His209, and Thr238. The residue at position 241 (Lys241) is an N6-(pyridoxal phosphate)lysine. Thr355 is a binding site for substrate.

It belongs to the class-II pyridoxal-phosphate-dependent aminotransferase family. BioF subfamily. As to quaternary structure, homodimer. Requires pyridoxal 5'-phosphate as cofactor.

It carries out the reaction 6-carboxyhexanoyl-[ACP] + L-alanine + H(+) = (8S)-8-amino-7-oxononanoate + holo-[ACP] + CO2. Its pathway is cofactor biosynthesis; biotin biosynthesis. Functionally, catalyzes the decarboxylative condensation of pimeloyl-[acyl-carrier protein] and L-alanine to produce 8-amino-7-oxononanoate (AON), [acyl-carrier protein], and carbon dioxide. The chain is 8-amino-7-oxononanoate synthase from Cellvibrio japonicus (strain Ueda107) (Pseudomonas fluorescens subsp. cellulosa).